A 552-amino-acid polypeptide reads, in one-letter code: CTP synthase (552 aa).

The tract at residues 1 to 267 is amidoligase domain; that stretch reads MSKFVFVTGG…AHQTLELLRM (267 aa). S13 provides a ligand contact to CTP. S13 is a binding site for UTP. ATP contacts are provided by residues 14-19 and D71; that span reads SIGKGI. Residues D71 and E141 each coordinate Mg(2+). CTP-binding positions include 148 to 150, 188 to 193, and K224; these read DIE and KTKPTQ. Residues 188 to 193 and K224 contribute to the UTP site; that span reads KTKPTQ. The 243-residue stretch at 292–534 folds into the Glutamine amidotransferase type-1 domain; it reads TVALVGKYVQ…INAVLKRRNA (243 aa). G354 serves as a coordination point for L-glutamine. C381 functions as the Nucleophile; for glutamine hydrolysis in the catalytic mechanism. Residues 382–385, E405, and R462 each bind L-glutamine; that span reads LGMQ. Residues H507 and E509 contribute to the active site.

Belongs to the CTP synthase family. As to quaternary structure, homotetramer.

It carries out the reaction UTP + L-glutamine + ATP + H2O = CTP + L-glutamate + ADP + phosphate + 2 H(+). It catalyses the reaction L-glutamine + H2O = L-glutamate + NH4(+). The catalysed reaction is UTP + NH4(+) + ATP = CTP + ADP + phosphate + 2 H(+). It participates in pyrimidine metabolism; CTP biosynthesis via de novo pathway; CTP from UDP: step 2/2. Allosterically activated by GTP, when glutamine is the substrate; GTP has no effect on the reaction when ammonia is the substrate. The allosteric effector GTP functions by stabilizing the protein conformation that binds the tetrahedral intermediate(s) formed during glutamine hydrolysis. Inhibited by the product CTP, via allosteric rather than competitive inhibition. Catalyzes the ATP-dependent amination of UTP to CTP with either L-glutamine or ammonia as the source of nitrogen. Regulates intracellular CTP levels through interactions with the four ribonucleotide triphosphates. This Synechocystis sp. (strain ATCC 27184 / PCC 6803 / Kazusa) protein is CTP synthase.